The sequence spans 99 residues: MNPDNYLHLSALLFTIGAAGVLLRRNVIVVFMCVELMLNAANLAFVAFSRMHGQLDGQVVAFFTMVVAACEVVIGLAIIMTIYRARRSASVDDANLLKH.

Helical transmembrane passes span 3 to 23, 28 to 48, and 59 to 79; these read PDNY…GVLL, IVVF…FVAF, and VVAF…LAII.

Belongs to the complex I subunit 4L family. As to quaternary structure, NDH-1 is composed of 14 different subunits. Subunits NuoA, H, J, K, L, M, N constitute the membrane sector of the complex.

The protein localises to the cell membrane. The catalysed reaction is a quinone + NADH + 5 H(+)(in) = a quinol + NAD(+) + 4 H(+)(out). In terms of biological role, NDH-1 shuttles electrons from NADH, via FMN and iron-sulfur (Fe-S) centers, to quinones in the respiratory chain. The immediate electron acceptor for the enzyme in this species is believed to be a menaquinone. Couples the redox reaction to proton translocation (for every two electrons transferred, four hydrogen ions are translocated across the cytoplasmic membrane), and thus conserves the redox energy in a proton gradient. This chain is NADH-quinone oxidoreductase subunit K, found in Mycobacterium sp. (strain KMS).